Reading from the N-terminus, the 200-residue chain is Glycerol-3-phosphate acyltransferase (200 aa).

Transmembrane regions (helical) follow at residues 2 to 22 (FNIS…AVIV), 51 to 71 (KAAA…VLLA), 84 to 104 (AIAA…FFGF), 114 to 134 (LGVL…IWLV), and 159 to 179 (FFMP…LVLF).

Belongs to the PlsY family. As to quaternary structure, probably interacts with PlsX.

The protein localises to the cell inner membrane. It catalyses the reaction an acyl phosphate + sn-glycerol 3-phosphate = a 1-acyl-sn-glycero-3-phosphate + phosphate. The protein operates within lipid metabolism; phospholipid metabolism. Catalyzes the transfer of an acyl group from acyl-phosphate (acyl-PO(4)) to glycerol-3-phosphate (G3P) to form lysophosphatidic acid (LPA). This enzyme utilizes acyl-phosphate as fatty acyl donor, but not acyl-CoA or acyl-ACP. The protein is Glycerol-3-phosphate acyltransferase of Neisseria meningitidis serogroup C (strain 053442).